A 99-amino-acid polypeptide reads, in one-letter code: NADH-quinone oxidoreductase subunit K (99 aa).

Transmembrane regions (helical) follow at residues 3–23 (PANY…GVLL), 28–48 (IVMF…FVTF), and 59–79 (MIAF…LAII).

Belongs to the complex I subunit 4L family. NDH-1 is composed of 14 different subunits. Subunits NuoA, H, J, K, L, M, N constitute the membrane sector of the complex.

It localises to the cell membrane. The catalysed reaction is a quinone + NADH + 5 H(+)(in) = a quinol + NAD(+) + 4 H(+)(out). NDH-1 shuttles electrons from NADH, via FMN and iron-sulfur (Fe-S) centers, to quinones in the respiratory chain. The immediate electron acceptor for the enzyme in this species is believed to be a menaquinone. Couples the redox reaction to proton translocation (for every two electrons transferred, four hydrogen ions are translocated across the cytoplasmic membrane), and thus conserves the redox energy in a proton gradient. The chain is NADH-quinone oxidoreductase subunit K from Mycobacterium marinum (strain ATCC BAA-535 / M).